The chain runs to 685 residues: DNA ligase (685 aa).

NAD(+) contacts are provided by residues 48-52 (DAEYD), 97-98 (SL), and glutamate 131. The N6-AMP-lysine intermediate role is filled by lysine 133. Residues arginine 154, glutamate 190, lysine 304, and lysine 328 each contribute to the NAD(+) site. Residues cysteine 422, cysteine 425, cysteine 440, and cysteine 445 each coordinate Zn(2+). Residues 603 to 685 (PEEGPLSGRR…RLLSGEERPG (83 aa)) form the BRCT domain.

The protein belongs to the NAD-dependent DNA ligase family. LigA subfamily. Mg(2+) is required as a cofactor. Requires Mn(2+) as cofactor.

The catalysed reaction is NAD(+) + (deoxyribonucleotide)n-3'-hydroxyl + 5'-phospho-(deoxyribonucleotide)m = (deoxyribonucleotide)n+m + AMP + beta-nicotinamide D-nucleotide.. In terms of biological role, DNA ligase that catalyzes the formation of phosphodiester linkages between 5'-phosphoryl and 3'-hydroxyl groups in double-stranded DNA using NAD as a coenzyme and as the energy source for the reaction. It is essential for DNA replication and repair of damaged DNA. This chain is DNA ligase, found in Rubrobacter xylanophilus (strain DSM 9941 / JCM 11954 / NBRC 16129 / PRD-1).